Reading from the N-terminus, the 213-residue chain is Superoxide dismutase [Fe] (213 aa).

Fe cation is bound by residues histidine 26, histidine 73, aspartate 156, and histidine 160.

The protein belongs to the iron/manganese superoxide dismutase family. In terms of assembly, homodimer. Fe cation serves as cofactor.

The catalysed reaction is 2 superoxide + 2 H(+) = H2O2 + O2. Functionally, destroys superoxide anion radicals which are normally produced within the cells and which are toxic to biological systems. The chain is Superoxide dismutase [Fe] (sodB) from Helicobacter pylori (strain ATCC 700392 / 26695) (Campylobacter pylori).